The chain runs to 141 residues: Hemoglobin subunit alpha-3 (141 aa).

Ser1 is modified (N-acetylserine). One can recognise a Globin domain in the interval 1–141 (SLSASEKAAV…VSAVLTSKYR (141 aa)). His58 contributes to the O2 binding site. His87 contributes to the heme b binding site.

It belongs to the globin family. Heterotetramer of two alpha chains and two beta chains. As to expression, red blood cells.

Functionally, this is a tadpole (larval) alpha chain. The protein is Hemoglobin subunit alpha-3 of Aquarana catesbeiana (American bullfrog).